A 156-amino-acid chain; its full sequence is Acanthoscurrin-1 (156 aa).

Residues 1-23 form the signal peptide; that stretch reads MAFRMKLVVCIVLLSTLAVMSSA. Residue Lys155 is modified to Lysine amide.

In terms of tissue distribution, expressed in hemocytes and secreted into the plasma following bacterial immune challenge.

The protein localises to the secreted. Antimicrobial protein. Strong activity against the Gram-negative bacterium E.coli SBS363 and yeast C.albicans. No detectable activity against the Gram-positive bacterium M.luteus. The protein is Acanthoscurrin-1 of Acanthoscurria gomesiana (Tarantula spider).